Consider the following 285-residue polypeptide: NAC domain-containing protein 92 (285 aa).

One can recognise an NAC domain in the interval 20-170; it reads LPPGFRFHPT…EWVICRVFQK (151 aa). A DNA-binding region spans residues 117 to 176; it reads VGMKKTLVFYKGRAPKGVKTNWVMHEYRLEGKYCIENLPQTAKNEWVICRVFQKRADGTK.

In terms of assembly, forms homodimers. Interacts with GLK1 and GLK2. Interacts with NLA. In terms of processing, ubiquitinated by NLA. Ubiquitination of NAC92 leads to its degradation by the proteasome during leaf senescence under nitrogen deficiency. Mostly expressed in roots and flowers, and, to a lower extent, in shoots and leaves. Particularly expressed in old and senescing tissues.

The protein localises to the nucleus. Transcription activator that binds to DNA in promoters of target genes on a specific bipartite motif 5'-[ACG][CA]GT[AG](5-6n)[CT]AC[AG]-3'. Promotes lateral root development. Triggers the expression of senescence-associated genes during age-, salt- and dark-induced senescence through a regulatory network that may involve cross-talk with salt- and H(2)O(2)-dependent signaling pathways. Also regulates genes during seed germination. Positively regulates aging-induced cell death. Involved in age-related resistance (ARR) against Pseudomonas syringae pv. tomato and Hyaloperonospora arabidopsidis. Antagonizes GLK1 and GLK2 transcriptional activity, shifting the balance from chloroplast maintenance towards deterioration during leaf senescence. Promotes the expression of senescence-associated genes, including ENDO1/BFN1, SWEET15/SAG29 and SINA1/At3g13672, during senescence onset. The sequence is that of NAC domain-containing protein 92 from Arabidopsis thaliana (Mouse-ear cress).